Reading from the N-terminus, the 401-residue chain is Imidazolonepropionase (401 aa).

Residues His66 and His68 each contribute to the Fe(3+) site. Residues His66 and His68 each contribute to the Zn(2+) site. 3 residues coordinate 4-imidazolone-5-propanoate: Arg75, Tyr138, and His171. Position 138 (Tyr138) interacts with N-formimidoyl-L-glutamate. His236 lines the Fe(3+) pocket. Residue His236 coordinates Zn(2+). Gln239 contributes to the 4-imidazolone-5-propanoate binding site. Position 311 (Asp311) interacts with Fe(3+). Residue Asp311 coordinates Zn(2+). Asn313 and Gly315 together coordinate N-formimidoyl-L-glutamate. Thr316 is a binding site for 4-imidazolone-5-propanoate.

The protein belongs to the metallo-dependent hydrolases superfamily. HutI family. Zn(2+) is required as a cofactor. Requires Fe(3+) as cofactor.

Its subcellular location is the cytoplasm. It catalyses the reaction 4-imidazolone-5-propanoate + H2O = N-formimidoyl-L-glutamate. The protein operates within amino-acid degradation; L-histidine degradation into L-glutamate; N-formimidoyl-L-glutamate from L-histidine: step 3/3. In terms of biological role, catalyzes the hydrolytic cleavage of the carbon-nitrogen bond in imidazolone-5-propanoate to yield N-formimidoyl-L-glutamate. It is the third step in the universal histidine degradation pathway. The chain is Imidazolonepropionase from Pseudomonas fluorescens (strain ATCC BAA-477 / NRRL B-23932 / Pf-5).